A 219-amino-acid chain; its full sequence is Octanoyltransferase (219 aa).

A BPL/LPL catalytic domain is found at 32–207; that stretch reads ADSGDEIWLL…HLVRQLGYAQ (176 aa). Residues 71-78, 138-140, and 151-153 each bind substrate; these read RGGQVTYH, SLG, and GLA. The active-site Acyl-thioester intermediate is cysteine 169.

This sequence belongs to the LipB family.

The protein localises to the cytoplasm. The enzyme catalyses octanoyl-[ACP] + L-lysyl-[protein] = N(6)-octanoyl-L-lysyl-[protein] + holo-[ACP] + H(+). The protein operates within protein modification; protein lipoylation via endogenous pathway; protein N(6)-(lipoyl)lysine from octanoyl-[acyl-carrier-protein]: step 1/2. Functionally, catalyzes the transfer of endogenously produced octanoic acid from octanoyl-acyl-carrier-protein onto the lipoyl domains of lipoate-dependent enzymes. Lipoyl-ACP can also act as a substrate although octanoyl-ACP is likely to be the physiological substrate. This chain is Octanoyltransferase, found in Stutzerimonas stutzeri (strain A1501) (Pseudomonas stutzeri).